The chain runs to 833 residues: Major vault protein (833 aa).

7 MVP repeats span residues Arg54 to Pro118, Pro119 to Tyr170, Pro171 to Ser223, Asp224 to Ser278, Lys280 to Gly328, Lys329 to Asp380, and Lys381 to Thr433.

The vault ribonucleoprotein particle is a huge (400 A x 670 A) cage structure of 12.9 MDa. It consists of a dimer of half-vaults, with each half-vault comprising 39 identical major vault protein (MVP) chains, PARP4 and one or more vault RNAs (vRNAs).

The protein resides in the cytoplasm. It is found in the nucleus. Its function is as follows. Required for normal vault structure. Vaults are multi-subunit structures that may act as scaffolds for proteins involved in signal transduction. Vaults may also play a role in nucleo-cytoplasmic transport. The sequence is that of Major vault protein from Leishmania infantum.